The chain runs to 1032 residues: Calmodulin-binding transcription activator 3 (1032 aa).

Residues 15–141 constitute a DNA-binding region (CG-1); sequence VGQILSEARH…YLEVKGSRVS (127 aa). Residues 146 to 197 form a disordered region; that stretch reads RMQRTEDAARSPQETGDALTSEHDGYASCSFNQNDHSNHSQTTDSASVNGFH. Polar residues predominate over residues 174-195; the sequence is CSFNQNDHSNHSQTTDSASVNG. S272 carries the phosphoserine modification. ANK repeat units lie at residues 661-690, 694-723, and 733-762; these read GGQG…SVDF, NGWT…APGT, and SGST…RAHV. IQ domains follow at residues 852–881 and 875–904; these read VQAA…RIIK and TRQR…SVGV. The calmodulin-binding stretch occupies residues 900–922; the sequence is WSVGVLEKVILRWRRKGAGLRGF. Residues 945 to 987 adopt a coiled-coil conformation; sequence KQGRKQTEDRLQKALARVKSMVQYPEARDQYRRLLNVVNDIQE. S964 carries the post-translational modification Phosphoserine.

It belongs to the CAMTA family. In terms of assembly, interacts with SR1IP1. Interacts with DSC1. Ubiquinated during pathogen infection. Ubiquitination leads to its subsequent proteasome-dependent degradation, thus allowing the establishment of plant defense response. Expressed in roots, stems, leaves, carpels, and siliques, but not in stigmas or other parts of the flower.

Its subcellular location is the nucleus. Functionally, transcription activator that binds to the DNA consensus sequence 5'-[ACG]CGCG[GTC]-3'. Binds calmodulin in a calcium-dependent manner in vitro. Regulates transcriptional activity in response to calcium signals. Involved in freezing tolerance in association with CAMTA1 and CAMTA2. Required for the cold-induced expression of DREB1B/CBF1, DREB1C/CBF2, ZAT12 and GOLS3. Involved in response to cold. Contributes together with CAMTA5 to the positive regulation of the cold-induced expression of DREB1A/CBF3, DREB1B/CBF1 and DREB1C/CBF2. Involved together with CAMTA2 and CAMTA4 in the positive regulation of a general stress response (GSR). Involved in the regulation of GSR amplitude downstream of MEKK1. Involved in the regulation of a set of genes involved in defense responses against pathogens. Involved in the regulation of both basal resistance and systemic acquired resistance (SAR). Acts as negative regulator of plant immunity. Binds to the promoter of the defense-related gene EDS1 and represses its expression. Binds to the promoter of the defense-related gene NDR1 and represses its expression. Involved in defense against insects. Required for tolerance to the generalist herbivore Trichoplusia ni, and contributes to the positive regulation of genes associated with glucosinolate metabolism. Required for tolerance to Bradysia impatiens larvae. Mediates herbivore-induced wound response. Required for wound-induced jasmonate accumulation. Involved in the regulation of ethylene-induced senescence by binding to the promoter of the senescence-inducer gene EIN3 and repressing its expression. This Arabidopsis thaliana (Mouse-ear cress) protein is Calmodulin-binding transcription activator 3.